Here is a 118-residue protein sequence, read N- to C-terminus: MTKNIHDVAYELQKAIAENDDFKTLKESYAAVQADAASKNLFDEFRTMQLSLQQKMMQGQEITEEDNQQAQEVVVRIQQDAKITKLMETEQRLNVVIGDVNKIIMKPLEELYSAQQQA.

Belongs to the UPF0342 family.

The chain is UPF0342 protein BT9727_0768 from Bacillus thuringiensis subsp. konkukian (strain 97-27).